Consider the following 446-residue polypeptide: Hercynine oxygenase (446 aa).

Position 51 (histidine 51) interacts with Fe cation. Arginine 87–arginine 90 contacts gamma-L-glutamyl-L-cysteine. Residues histidine 134 and histidine 138 each coordinate Fe cation. Aspartate 416 and arginine 420 together coordinate gamma-L-glutamyl-L-cysteine.

It belongs to the EgtB family. Monomer. Fe(2+) serves as cofactor.

It catalyses the reaction gamma-L-glutamyl-L-cysteine + hercynine + O2 = gamma-L-glutamyl-hercynylcysteine S-oxide + H2O. It functions in the pathway amino-acid biosynthesis; ergothioneine biosynthesis. Catalyzes the oxidative sulfurization of hercynine (N-alpha,N-alpha,N-alpha-trimethyl-L-histidine) into hercynyl-gamma-L-glutamyl-L-cysteine sulfoxide, a step in the biosynthesis pathway of ergothioneine. The polypeptide is Hercynine oxygenase (Mycolicibacterium thermoresistibile (strain ATCC 19527 / DSM 44167 / CIP 105390 / JCM 6362 / NCTC 10409 / 316) (Mycobacterium thermoresistibile)).